A 545-amino-acid polypeptide reads, in one-letter code: Probable bifunctional tRNA threonylcarbamoyladenosine biosynthesis protein (545 aa).

Positions 1-329 (MDTSKDLICI…YRSDMVEVNW (329 aa)) are kae1. Fe cation-binding residues include His112, His116, and Tyr133. Residues 133 to 137 (YVSGG), Asp165, Gly178, Glu182, and Asn262 each bind L-threonylcarbamoyladenylate. Residue Asp290 participates in Fe cation binding. Residues 344 to 545 (IIPEHLIGKG…KEVEKRARYL (202 aa)) enclose the Protein kinase domain. ATP-binding positions include 350–358 (IGKGAEADI) and Lys371. Residue Asp463 is the Proton acceptor; for kinase activity of the active site.

It in the N-terminal section; belongs to the KAE1 / TsaD family. The protein in the C-terminal section; belongs to the protein kinase superfamily. Tyr protein kinase family. BUD32 subfamily. As to quaternary structure, component of the KEOPS complex that consists of Kae1, Bud32, Cgi121 and Pcc1; the whole complex dimerizes. Requires Fe(2+) as cofactor.

It localises to the cytoplasm. It carries out the reaction L-seryl-[protein] + ATP = O-phospho-L-seryl-[protein] + ADP + H(+). The catalysed reaction is L-threonyl-[protein] + ATP = O-phospho-L-threonyl-[protein] + ADP + H(+). The enzyme catalyses L-threonylcarbamoyladenylate + adenosine(37) in tRNA = N(6)-L-threonylcarbamoyladenosine(37) in tRNA + AMP + H(+). Its function is as follows. Required for the formation of a threonylcarbamoyl group on adenosine at position 37 (t(6)A37) in tRNAs that read codons beginning with adenine. Is a component of the KEOPS complex that is probably involved in the transfer of the threonylcarbamoyl moiety of threonylcarbamoyl-AMP (TC-AMP) to the N6 group of A37. The Kae1 domain likely plays a direct catalytic role in this reaction. The Bud32 domain probably displays kinase activity that regulates Kae1 function. The protein is Probable bifunctional tRNA threonylcarbamoyladenosine biosynthesis protein of Methanococcus maripaludis (strain C5 / ATCC BAA-1333).